The following is a 149-amino-acid chain: Sperm surface protein Sp17 (149 aa).

Residues 83 to 96 (CEQELAKSSGREET) show a composition bias toward basic and acidic residues. Residues 83 to 114 (CEQELAKSSGREETPVTPFEESTEEEREQEEA) form a disordered region. Over residues 103–113 (ESTEEEREQEE) the composition is skewed to acidic residues. Positions 112-141 (EEAAALKIQSLFRGHVAREEVKKMKSDKNE) constitute an IQ domain.

In terms of assembly, homodimer. May interact with ROPN1. As to expression, testis- and sperm-specific.

It localises to the membrane. In terms of biological role, sperm surface zona pellucida binding protein. Helps to bind spermatozoa to the zona pellucida with high affinity. Might function in binding zona pellucida and carbohydrates. In Mus musculus (Mouse), this protein is Sperm surface protein Sp17 (Spa17).